The sequence spans 399 residues: Aspartate aminotransferase (399 aa).

L-aspartate is bound by residues G42 and N179. K240 carries the post-translational modification N6-(pyridoxal phosphate)lysine. R372 contributes to the L-aspartate binding site.

This sequence belongs to the class-I pyridoxal-phosphate-dependent aminotransferase family. As to quaternary structure, homodimer. The cofactor is pyridoxal 5'-phosphate.

The protein localises to the cytoplasm. It catalyses the reaction L-aspartate + 2-oxoglutarate = oxaloacetate + L-glutamate. This Sulfurisphaera tokodaii (strain DSM 16993 / JCM 10545 / NBRC 100140 / 7) (Sulfolobus tokodaii) protein is Aspartate aminotransferase (aspC).